Consider the following 161-residue polypeptide: MPSFDVVSEVNKHELTNAVDQANRELDTRFDFKGVQAKFELEDGKVINQSAPSDFQVKQMTDILRARLLARGIDVRCLEFGDMETNLAGARQKVTVKQGIEQKQAKQLVAKLKEAKLKVEAQINGDKLRITGKKRDDLQDAIALLKKADFELPLQFDNFRD.

It belongs to the YajQ family.

Nucleotide-binding protein. This is Nucleotide-binding protein XOO0647 from Xanthomonas oryzae pv. oryzae (strain MAFF 311018).